A 181-amino-acid chain; its full sequence is Inner membrane-spanning protein YciB (181 aa).

5 helical membrane-spanning segments follow: residues 10 to 30 (LIIF…GALI), 50 to 70 (MHLI…VFHD), 72 to 92 (AFIK…LGVS), 118 to 138 (VTWY…YVAF), and 148 to 168 (FKVF…VFYL).

Belongs to the YciB family.

It localises to the cell inner membrane. Its function is as follows. Plays a role in cell envelope biogenesis, maintenance of cell envelope integrity and membrane homeostasis. The chain is Inner membrane-spanning protein YciB from Shewanella sp. (strain MR-4).